Here is a 211-residue protein sequence, read N- to C-terminus: RING finger protein 222 (211 aa).

Residues 14–65 form an RING-type zinc finger; sequence CPVCYEKFRDLDGASRTLSCGHVFCHDCLVKYLLSTRVDGQVQRTIVCPICR. Residues 187–207 traverse the membrane as a helical segment; sequence LITLIAVVAVVAAILPWVLLV.

It localises to the membrane. This is RING finger protein 222 (Rnf222) from Mus musculus (Mouse).